Consider the following 430-residue polypeptide: Dihydroorotase (430 aa).

Zn(2+) contacts are provided by H57 and H59. Residues H59 to R61 and N91 contribute to the substrate site. Zn(2+)-binding residues include D151, H178, and H231. Position 277 (N277) interacts with substrate. D304 provides a ligand contact to Zn(2+). Residue D304 is part of the active site. Residues H308 and P322–G323 contribute to the substrate site.

It belongs to the metallo-dependent hydrolases superfamily. DHOase family. Class I DHOase subfamily. Zn(2+) is required as a cofactor.

It carries out the reaction (S)-dihydroorotate + H2O = N-carbamoyl-L-aspartate + H(+). Its pathway is pyrimidine metabolism; UMP biosynthesis via de novo pathway; (S)-dihydroorotate from bicarbonate: step 3/3. Its function is as follows. Catalyzes the reversible cyclization of carbamoyl aspartate to dihydroorotate. The protein is Dihydroorotase of Mycobacterium leprae (strain TN).